Consider the following 572-residue polypeptide: Oxygen-dependent choline dehydrogenase (572 aa).

9-38 (DYVIIGGGSAGSVLGARLSEDKDKNVLVLE) serves as a coordination point for FAD. His477 functions as the Proton acceptor in the catalytic mechanism.

Belongs to the GMC oxidoreductase family. FAD serves as cofactor.

It carries out the reaction choline + A = betaine aldehyde + AH2. The catalysed reaction is betaine aldehyde + NAD(+) + H2O = glycine betaine + NADH + 2 H(+). It functions in the pathway amine and polyamine biosynthesis; betaine biosynthesis via choline pathway; betaine aldehyde from choline (cytochrome c reductase route): step 1/1. In terms of biological role, involved in the biosynthesis of the osmoprotectant glycine betaine. Catalyzes the oxidation of choline to betaine aldehyde and betaine aldehyde to glycine betaine at the same rate. This is Oxygen-dependent choline dehydrogenase from Staphylococcus epidermidis (strain ATCC 12228 / FDA PCI 1200).